We begin with the raw amino-acid sequence, 453 residues long: Folate transporter 1 (453 aa).

An N-linked (GlcNAc...) asparagine glycan is attached at Asn-36. Helical transmembrane passes span 48 to 68, 73 to 93, 102 to 122, 136 to 156, and 161 to 181; these read PYWT…TDIL, IVMI…FGKG, VSFG…YSIV, AAAL…ISTH, and LVLN…AIFL. Asn-260 carries an N-linked (GlcNAc...) asparagine glycan. Helical transmembrane passes span 276–296, 306–326, 331–351, 368–388, and 401–421; these read VANG…SLFI, HGQM…YLCS, VLVA…LITA, IFGC…LVVV, and FVIY…FFMI.

This sequence belongs to the reduced folate carrier (RFC) transporter (TC 2.A.48) family. Highly expressed in pharynx and posterior part of the intestine. Expressed at lower levels in the body wall muscles, head muscles, and vulva muscles. Highly expressed in the intestine of the early larva, levels decrease in the later stages of development.

The protein localises to the membrane. Functionally, folate transporter. In Caenorhabditis elegans, this protein is Folate transporter 1 (folt-1).